A 263-amino-acid polypeptide reads, in one-letter code: MLATIDPIALRLGPISIHWYAICIVSGLLLAVYLAQRLAPEKGINPEHILDFILLAFPIAIVGARLYYVIFQWSYYSQNPSEIFAIWNGGIAIYGGLIAGAAVLYWFAKRHAIAVLDFLDIAAPGVMIAQSIGRWGNFVNQEAYGKAVSQLNYLPEIIRQQMFINGSYRVPTFLYESLWNLVGFSIILGLRYFNKGLRQGDVTSFYLIWYGLGRFVIEGMRTDSLMFVGLRVSQWVSISIIILGAVLLYFRKQRQKADYKMKN.

The next 4 membrane-spanning stretches (helical) occupy residues 15 to 35 (ISIHWYAICIVSGLLLAVYLA), 52 to 72 (FILLAFPIAIVGARLYYVIFQ), 83 to 103 (IFAIWNGGIAIYGGLIAGAAV), and 112 to 132 (AIAVLDFLDIAAPGVMIAQSI). Arginine 134 is a binding site for a 1,2-diacyl-sn-glycero-3-phospho-(1'-sn-glycerol). Transmembrane regions (helical) follow at residues 170-190 (VPTFLYESLWNLVGFSIILGL), 200-220 (GDVTSFYLIWYGLGRFVIEGM), and 227-247 (FVGLRVSQWVSISIIILGAVL).

It belongs to the Lgt family.

It localises to the cell membrane. It carries out the reaction L-cysteinyl-[prolipoprotein] + a 1,2-diacyl-sn-glycero-3-phospho-(1'-sn-glycerol) = an S-1,2-diacyl-sn-glyceryl-L-cysteinyl-[prolipoprotein] + sn-glycerol 1-phosphate + H(+). It participates in protein modification; lipoprotein biosynthesis (diacylglyceryl transfer). In terms of biological role, catalyzes the transfer of the diacylglyceryl group from phosphatidylglycerol to the sulfhydryl group of the N-terminal cysteine of a prolipoprotein, the first step in the formation of mature lipoproteins. This chain is Phosphatidylglycerol--prolipoprotein diacylglyceryl transferase, found in Streptococcus thermophilus (strain CNRZ 1066).